An 82-amino-acid chain; its full sequence is Myosin light chain alkali (82 aa).

The 36-residue stretch at 7-42 folds into the EF-hand domain; it reads GCYGDFIECLKLYDKEENGTMMLAELQHALLALGES.

As to quaternary structure, myosin is a hexamer of 2 heavy chains and 4 light chains.

The chain is Myosin light chain alkali (Mlc1) from Drosophila sechellia (Fruit fly).